Here is a 326-residue protein sequence, read N- to C-terminus: Pyruvate dehydrogenase E1 component subunit beta (326 aa).

Position 59 (Glu59) interacts with thiamine diphosphate.

Heterodimer of an alpha and a beta chain. It depends on thiamine diphosphate as a cofactor.

It carries out the reaction N(6)-[(R)-lipoyl]-L-lysyl-[protein] + pyruvate + H(+) = N(6)-[(R)-S(8)-acetyldihydrolipoyl]-L-lysyl-[protein] + CO2. In terms of biological role, the pyruvate dehydrogenase complex catalyzes the overall conversion of pyruvate to acetyl-CoA and CO(2). It contains multiple copies of three enzymatic components: pyruvate dehydrogenase (E1), dihydrolipoamide acetyltransferase (E2) and lipoamide dehydrogenase (E3). The protein is Pyruvate dehydrogenase E1 component subunit beta (pdhB) of Rickettsia conorii (strain ATCC VR-613 / Malish 7).